The primary structure comprises 342 residues: Oxygen-dependent coproporphyrinogen-III oxidase (342 aa).

S98 serves as a coordination point for substrate. H102 and H112 together coordinate a divalent metal cation. H112 acts as the Proton donor in catalysis. 114–116 (NYR) lines the substrate pocket. A divalent metal cation contacts are provided by H146 and H176. Residues 266–301 (YVEFNLVWDRGTIFGLQTNGRTESILMSLPPLARWE) form an important for dimerization region.

Belongs to the aerobic coproporphyrinogen-III oxidase family. As to quaternary structure, homodimer. A divalent metal cation is required as a cofactor.

It localises to the cytoplasm. The catalysed reaction is coproporphyrinogen III + O2 + 2 H(+) = protoporphyrinogen IX + 2 CO2 + 2 H2O. It functions in the pathway porphyrin-containing compound metabolism; protoporphyrin-IX biosynthesis; protoporphyrinogen-IX from coproporphyrinogen-III (O2 route): step 1/1. In terms of biological role, involved in the heme and chlorophyll biosynthesis. Catalyzes the aerobic oxidative decarboxylation of propionate groups of rings A and B of coproporphyrinogen-III to yield the vinyl groups in protoporphyrinogen-IX. This Prochlorococcus marinus (strain MIT 9301) protein is Oxygen-dependent coproporphyrinogen-III oxidase.